A 263-amino-acid chain; its full sequence is Fructose-bisphosphate aldolase class 1 (263 aa).

Residue Lys177 is the Schiff-base intermediate with dihydroxyacetone-P of the active site.

Belongs to the DeoC/FbaB aldolase family.

It carries out the reaction beta-D-fructose 1,6-bisphosphate = D-glyceraldehyde 3-phosphate + dihydroxyacetone phosphate. Functionally, has aldolase activity with fructose 1,6-bisphosphate. May play a role in the biosynthesis of aromatic amino acids (AroAA). The chain is Fructose-bisphosphate aldolase class 1 (fba1) from Halobacterium salinarum (strain ATCC 29341 / DSM 671 / R1).